Reading from the N-terminus, the 356-residue chain is TPR repeat-containing protein P27G11.02 (356 aa).

Residues 1 to 20 (MRMQWIWKSRRSLQNVFIRR) constitute a mitochondrion transit peptide. TPR repeat units follow at residues 194–227 (SRLF…TMAN) and 290–323 (AAAF…RKDD).

The protein resides in the mitochondrion. In Schizosaccharomyces pombe (strain 972 / ATCC 24843) (Fission yeast), this protein is TPR repeat-containing protein P27G11.02.